A 238-amino-acid polypeptide reads, in one-letter code: Large ribosomal subunit protein uL2 (238 aa).

The segment at 200–238 is disordered; it reads HGGGLHQSVSRPSTVSRNAPPGRKVGHIAARRTGRKEGK. Polar residues predominate over residues 206–216; sequence QSVSRPSTVSR. The span at 223 to 238 shows a compositional bias: basic residues; the sequence is KVGHIAARRTGRKEGK.

This sequence belongs to the universal ribosomal protein uL2 family. As to quaternary structure, part of the 50S ribosomal subunit. Forms a bridge to the 30S subunit in the 70S ribosome.

In terms of biological role, one of the primary rRNA binding proteins. Required for association of the 30S and 50S subunits to form the 70S ribosome, for tRNA binding and peptide bond formation. It has been suggested to have peptidyltransferase activity; this is somewhat controversial. Makes several contacts with the 16S rRNA in the 70S ribosome. The protein is Large ribosomal subunit protein uL2 of Saccharolobus islandicus (strain Y.N.15.51 / Yellowstone #2) (Sulfolobus islandicus).